The sequence spans 112 residues: Conotoxin vil14.4 (112 aa).

The N-terminal stretch at 1-22 (MGFRVLVLVVMATTSALPFTFF) is a signal peptide. A propeptide spanning residues 23 to 85 (EEPGRSPFRP…FAELSVGQRR (63 aa)) is cleaved from the precursor. Disulfide bonds link C91–C111 and C95–C107.

It belongs to the conotoxin R superfamily. Expressed by the venom duct.

The protein localises to the secreted. The sequence is that of Conotoxin vil14.4 from Conus villepinii (Villepin's cone).